We begin with the raw amino-acid sequence, 423 residues long: Mannose-6-phosphate isomerase (423 aa).

Position 2 is an N-acetylalanine (Ala2). Residues Ser102 and Ser108 each carry the phosphoserine modification. 4 residues coordinate Zn(2+): Gln110, His112, Glu137, and His276. Residue Arg295 is part of the active site.

This sequence belongs to the mannose-6-phosphate isomerase type 1 family. Zn(2+) serves as cofactor.

It localises to the cytoplasm. It carries out the reaction D-mannose 6-phosphate = D-fructose 6-phosphate. Its pathway is nucleotide-sugar biosynthesis; GDP-alpha-D-mannose biosynthesis; alpha-D-mannose 1-phosphate from D-fructose 6-phosphate: step 1/2. Isomerase that catalyzes the interconversion of fructose-6-P and mannose-6-P and has a critical role in the supply of D-mannose derivatives required for many eukaryotic glycosylation reactions. The protein is Mannose-6-phosphate isomerase (MPI) of Bos taurus (Bovine).